The following is a 93-amino-acid chain: Large ribosomal subunit protein uL23cz/uL23cy (93 aa).

Belongs to the universal ribosomal protein uL23 family. Part of the 50S ribosomal subunit.

It localises to the plastid. It is found in the chloroplast. Its function is as follows. Binds to 23S rRNA. This Populus alba (White poplar) protein is Large ribosomal subunit protein uL23cz/uL23cy (rpl23-A).